Consider the following 207-residue polypeptide: N-(5'-phosphoribosyl)anthranilate isomerase (207 aa).

The protein belongs to the TrpF family.

The catalysed reaction is N-(5-phospho-beta-D-ribosyl)anthranilate = 1-(2-carboxyphenylamino)-1-deoxy-D-ribulose 5-phosphate. Its pathway is amino-acid biosynthesis; L-tryptophan biosynthesis; L-tryptophan from chorismate: step 3/5. The sequence is that of N-(5'-phosphoribosyl)anthranilate isomerase from Staphylococcus epidermidis (strain ATCC 35984 / DSM 28319 / BCRC 17069 / CCUG 31568 / BM 3577 / RP62A).